Here is a 572-residue protein sequence, read N- to C-terminus: E3 ubiquitin-protein ligase ZFP91 (572 aa).

Basic and acidic residues predominate over residues 1-12; it reads MPGETEEPRSPE. Residues 1 to 308 form a disordered region; it reads MPGETEEPRS…PRLPKRRKKP (308 aa). Positions 61 to 70 are enriched in low complexity; sequence AAAAAAAAAA. Residues 72 to 85 show a composition bias toward basic residues; it reads SRRRKAEYPRRRRS. Residues serine 86 and serine 106 each carry the phosphoserine modification. Residues 122 to 131 are compositionally biased toward basic and acidic residues; that stretch reads LTTDKDPKEE. The segment covering 143 to 162 has biased composition (low complexity); it reads SITTTRASRSWRSSSRTSIS. Residues 209–225 are compositionally biased toward acidic residues; the sequence is SDEEEEEEEEMLISEEE. Composition is skewed to basic and acidic residues over residues 226–247 and 254–271; these read IPFK…ETPK and KVKE…VEVE. The segment covering 272–284 has biased composition (acidic residues); that stretch reads VKEEENEIREDEE. 5 C2H2-type zinc fingers span residues 313–338, 344–368, 374–396, 402–424, and 432–455; these read VRCE…KYQH, YVCP…AKHH, YICE…RMIH, LQCE…MKKH, and FSCN…AKSH. Positions 340 to 370 are interaction with MAP3K14/NIK; the sequence is LKKKYVCPHPSCGRLFRLQKQLLRHAKHHTD.

The protein belongs to the krueppel C2H2-type zinc-finger protein family. Interacts with MAP3K14/NIK. Found in all the examined tissues including brain, heart, kidney, lung, liver, spleen, thymus, skeletal muscle, ovary and testis.

Its subcellular location is the nucleus. It carries out the reaction S-ubiquitinyl-[E2 ubiquitin-conjugating enzyme]-L-cysteine + [acceptor protein]-L-lysine = [E2 ubiquitin-conjugating enzyme]-L-cysteine + N(6)-ubiquitinyl-[acceptor protein]-L-lysine.. The protein operates within protein modification; protein ubiquitination. Its function is as follows. Atypical E3 ubiquitin-protein ligase that mediates 'Lys-63'-linked ubiquitination of MAP3K14/NIK, leading to stabilize and activate MAP3K14/NIK. It thereby acts as an activator of the non-canonical NF-kappa-B2/NFKB2 pathway. May also play an important role in cell proliferation and/or anti-apoptosis. The protein is E3 ubiquitin-protein ligase ZFP91 (Zfp91) of Mus musculus (Mouse).